The chain runs to 391 residues: Succinate--CoA ligase [ADP-forming] subunit beta (391 aa).

The region spanning 9–246 (KHLFADYDIP…ITQEDEAEVQ (238 aa)) is the ATP-grasp domain. Residues K46, 53-55 (GRG), E99, L102, and E107 contribute to the ATP site. Mg(2+) is bound by residues N199 and D213. Residues N266 and 323–325 (GIV) each bind substrate.

The protein belongs to the succinate/malate CoA ligase beta subunit family. As to quaternary structure, heterotetramer of two alpha and two beta subunits. Mg(2+) serves as cofactor.

The catalysed reaction is succinate + ATP + CoA = succinyl-CoA + ADP + phosphate. The enzyme catalyses GTP + succinate + CoA = succinyl-CoA + GDP + phosphate. The protein operates within carbohydrate metabolism; tricarboxylic acid cycle; succinate from succinyl-CoA (ligase route): step 1/1. Succinyl-CoA synthetase functions in the citric acid cycle (TCA), coupling the hydrolysis of succinyl-CoA to the synthesis of either ATP or GTP and thus represents the only step of substrate-level phosphorylation in the TCA. The beta subunit provides nucleotide specificity of the enzyme and binds the substrate succinate, while the binding sites for coenzyme A and phosphate are found in the alpha subunit. In Alkalilimnicola ehrlichii (strain ATCC BAA-1101 / DSM 17681 / MLHE-1), this protein is Succinate--CoA ligase [ADP-forming] subunit beta.